The following is a 627-amino-acid chain: 1-deoxy-D-xylulose-5-phosphate synthase (627 aa).

Thiamine diphosphate-binding positions include His80 and 121 to 123 (GHS). Asp152 is a Mg(2+) binding site. Residues 153 to 154 (GA), Asn181, Tyr288, and Glu370 contribute to the thiamine diphosphate site. Position 181 (Asn181) interacts with Mg(2+).

This sequence belongs to the transketolase family. DXPS subfamily. As to quaternary structure, homodimer. The cofactor is Mg(2+). Requires thiamine diphosphate as cofactor.

The catalysed reaction is D-glyceraldehyde 3-phosphate + pyruvate + H(+) = 1-deoxy-D-xylulose 5-phosphate + CO2. It participates in metabolic intermediate biosynthesis; 1-deoxy-D-xylulose 5-phosphate biosynthesis; 1-deoxy-D-xylulose 5-phosphate from D-glyceraldehyde 3-phosphate and pyruvate: step 1/1. In terms of biological role, catalyzes the acyloin condensation reaction between C atoms 2 and 3 of pyruvate and glyceraldehyde 3-phosphate to yield 1-deoxy-D-xylulose-5-phosphate (DXP). The chain is 1-deoxy-D-xylulose-5-phosphate synthase from Aliivibrio salmonicida (strain LFI1238) (Vibrio salmonicida (strain LFI1238)).